The sequence spans 426 residues: Histidine--tRNA ligase (426 aa).

The protein belongs to the class-II aminoacyl-tRNA synthetase family. In terms of assembly, homodimer.

The protein resides in the cytoplasm. It carries out the reaction tRNA(His) + L-histidine + ATP = L-histidyl-tRNA(His) + AMP + diphosphate + H(+). The chain is Histidine--tRNA ligase from Legionella pneumophila (strain Paris).